The chain runs to 682 residues: L-type lectin-domain containing receptor kinase VI.2 (682 aa).

A signal peptide spans 1–26; the sequence is MGTQRSMFIVSFLFKLFLFLSVHVRA. Residues 27-310 lie on the Extracellular side of the membrane; sequence QRTTTNFAFR…AKKEGLNSQV (284 aa). The interval 29 to 277 is legume-lectin like; the sequence is TTTNFAFRGF…AHYVMGWSFS (249 aa). A helical membrane pass occupies residues 311–331; that stretch reads IVMIVALSAVMLVMLVLLFFF. Residues 332 to 682 are Cytoplasmic-facing; that stretch reads VMYKKRLGQE…RVSSTSRISQ (351 aa). The Protein kinase domain maps to 367-641; sequence FKKTGIIGTG…LRYLNGEENV (275 aa). ATP is bound by residues 373–381 and K395; that span reads IGTGGFGTV. D494 acts as the Proton acceptor in catalysis.

In the C-terminal section; belongs to the protein kinase superfamily. Ser/Thr protein kinase family. This sequence in the N-terminal section; belongs to the leguminous lectin family. As to expression, strongly expressed in the vascular system and trichomes of the leaves. Also expressed in guard cells, anthers, stigmas and germinating seeds, but not found in petals or roots. Increased susceptibility to the bacteria Pseudomonas syringae, characterized by stronger necrotic symptoms and higher bacterial proliferation.

It is found in the cell membrane. The enzyme catalyses L-seryl-[protein] + ATP = O-phospho-L-seryl-[protein] + ADP + H(+). It catalyses the reaction L-threonyl-[protein] + ATP = O-phospho-L-threonyl-[protein] + ADP + H(+). Functionally, involved in negative regulation of abscisic acid response in seed germination. In terms of biological role, involved in resistance response to the pathogenic bacteria Pseudomonas syringae. The sequence is that of L-type lectin-domain containing receptor kinase VI.2 from Arabidopsis thaliana (Mouse-ear cress).